The sequence spans 89 residues: Small ribosomal subunit protein uS14 (89 aa).

Belongs to the universal ribosomal protein uS14 family. Part of the 30S ribosomal subunit. Contacts proteins S3 and S10.

Its function is as follows. Binds 16S rRNA, required for the assembly of 30S particles and may also be responsible for determining the conformation of the 16S rRNA at the A site. The polypeptide is Small ribosomal subunit protein uS14 (Phytoplasma australiense).